The sequence spans 449 residues: Jacalin-related lectin 20 (449 aa).

Disordered stretches follow at residues 1–20 (MAQR…DDGA) and 294–314 (APPI…GDGG). Ala-2 bears the N-acetylalanine mark. 3 consecutive Jacalin-type lectin domains span residues 2–144 (AQRL…YFTP), 147–294 (PIKQ…HFGA), and 303–446 (TEKL…TVAP).

It belongs to the jacalin lectin family.

This chain is Jacalin-related lectin 20 (JAL20), found in Arabidopsis thaliana (Mouse-ear cress).